We begin with the raw amino-acid sequence, 122 residues long: Large ribosomal subunit protein bL12 (122 aa).

This sequence belongs to the bacterial ribosomal protein bL12 family. In terms of assembly, homodimer. Part of the ribosomal stalk of the 50S ribosomal subunit. Forms a multimeric L10(L12)X complex, where L10 forms an elongated spine to which 2 to 4 L12 dimers bind in a sequential fashion. Binds GTP-bound translation factors.

Forms part of the ribosomal stalk which helps the ribosome interact with GTP-bound translation factors. Is thus essential for accurate translation. The polypeptide is Large ribosomal subunit protein bL12 (Deinococcus geothermalis (strain DSM 11300 / CIP 105573 / AG-3a)).